Consider the following 271-residue polypeptide: Formamidopyrimidine-DNA glycosylase (271 aa).

Residue proline 2 is the Schiff-base intermediate with DNA of the active site. Glutamate 3 functions as the Proton donor in the catalytic mechanism. The active-site Proton donor; for beta-elimination activity is lysine 58. DNA is bound by residues histidine 91, arginine 110, and arginine 152. The FPG-type zinc finger occupies arginine 237–arginine 271. Arginine 261 (proton donor; for delta-elimination activity) is an active-site residue.

This sequence belongs to the FPG family. Monomer. Requires Zn(2+) as cofactor.

It carries out the reaction Hydrolysis of DNA containing ring-opened 7-methylguanine residues, releasing 2,6-diamino-4-hydroxy-5-(N-methyl)formamidopyrimidine.. The catalysed reaction is 2'-deoxyribonucleotide-(2'-deoxyribose 5'-phosphate)-2'-deoxyribonucleotide-DNA = a 3'-end 2'-deoxyribonucleotide-(2,3-dehydro-2,3-deoxyribose 5'-phosphate)-DNA + a 5'-end 5'-phospho-2'-deoxyribonucleoside-DNA + H(+). Its function is as follows. Involved in base excision repair of DNA damaged by oxidation or by mutagenic agents. Acts as a DNA glycosylase that recognizes and removes damaged bases. Has a preference for oxidized purines, such as 7,8-dihydro-8-oxoguanine (8-oxoG). Has AP (apurinic/apyrimidinic) lyase activity and introduces nicks in the DNA strand. Cleaves the DNA backbone by beta-delta elimination to generate a single-strand break at the site of the removed base with both 3'- and 5'-phosphates. This is Formamidopyrimidine-DNA glycosylase from Thioalkalivibrio sulfidiphilus (strain HL-EbGR7).